Reading from the N-terminus, the 485-residue chain is Glutamyl-tRNA(Gln) amidotransferase subunit A (485 aa).

Active-site charge relay system residues include Lys76 and Ser151. The active-site Acyl-ester intermediate is the Ser175.

This sequence belongs to the amidase family. GatA subfamily. As to quaternary structure, heterotrimer of A, B and C subunits.

It catalyses the reaction L-glutamyl-tRNA(Gln) + L-glutamine + ATP + H2O = L-glutaminyl-tRNA(Gln) + L-glutamate + ADP + phosphate + H(+). Its function is as follows. Allows the formation of correctly charged Gln-tRNA(Gln) through the transamidation of misacylated Glu-tRNA(Gln) in organisms which lack glutaminyl-tRNA synthetase. The reaction takes place in the presence of glutamine and ATP through an activated gamma-phospho-Glu-tRNA(Gln). The protein is Glutamyl-tRNA(Gln) amidotransferase subunit A of Chlorobium luteolum (strain DSM 273 / BCRC 81028 / 2530) (Pelodictyon luteolum).